A 274-amino-acid polypeptide reads, in one-letter code: MSRVGVLALGPAGVGKSTFCNSIITHMQSIGRRAHIVNLDPAAEPSEYEFTIDIRDLISLQDVMEEMDLGPNGALIYCFEFLMNNLDWLDEEIGDFNDEYLIFDCPGQIELYTHIPVLPTIVRHLQTSLNFNLCATYLLEAPFVIDRSKFFSGALSAMSAMILLELPHINILSKIDLIKNEVSKKELKKFLNPDPLLLNASSDNESNPKFAKLNKAIANLVDDFGMVQFLPLDCNKDSDSVATILSYIDDVTQWSESQEPKEPVEEIEEEVDFE.

GTP is bound at residue 13–18 (GVGKST). The Gly-Pro-Asn (GPN)-loop; involved in dimer interface motif lies at 70-72 (GPN). 173–176 (SKID) is a GTP binding site. The disordered stretch occupies residues 255–274 (SESQEPKEPVEEIEEEVDFE). Residues 265–274 (EEIEEEVDFE) are compositionally biased toward acidic residues.

It belongs to the GPN-loop GTPase family. Heterodimers with GPN1 or GPN2. Binds to RNA polymerase II (RNAPII).

Functionally, small GTPase required for proper nuclear import of RNA polymerase II and III (RNAPII and RNAPIII). May act at an RNAP assembly step prior to nuclear import. This is GPN-loop GTPase 3 from Debaryomyces hansenii (strain ATCC 36239 / CBS 767 / BCRC 21394 / JCM 1990 / NBRC 0083 / IGC 2968) (Yeast).